Consider the following 199-residue polypeptide: ATP-dependent Clp protease proteolytic subunit 2 (199 aa).

Catalysis depends on Ser98, which acts as the Nucleophile. The active site involves His123.

It belongs to the peptidase S14 family. In terms of assembly, fourteen ClpP subunits assemble into 2 heptameric rings which stack back to back to give a disk-like structure with a central cavity, resembling the structure of eukaryotic proteasomes.

The protein resides in the cytoplasm. It carries out the reaction Hydrolysis of proteins to small peptides in the presence of ATP and magnesium. alpha-casein is the usual test substrate. In the absence of ATP, only oligopeptides shorter than five residues are hydrolyzed (such as succinyl-Leu-Tyr-|-NHMec, and Leu-Tyr-Leu-|-Tyr-Trp, in which cleavage of the -Tyr-|-Leu- and -Tyr-|-Trp bonds also occurs).. Its function is as follows. Cleaves peptides in various proteins in a process that requires ATP hydrolysis. Has a chymotrypsin-like activity. Plays a major role in the degradation of misfolded proteins. The protein is ATP-dependent Clp protease proteolytic subunit 2 of Corynebacterium diphtheriae (strain ATCC 700971 / NCTC 13129 / Biotype gravis).